The following is a 139-amino-acid chain: Cuticle protein 6 (139 aa).

Pyrrolidone carboxylic acid is present on Gln-1. The Chitin-binding type R&amp;R domain occupies 31–92 (LGQFAFHHAG…VGANNLPEAP (62 aa)).

The sequence is that of Cuticle protein 6 from Blaberus craniifer (Death's head cockroach).